The sequence spans 309 residues: MRRAALWLWLCALALRLQPVLPQIVTVNVPPEDQDGSGDDSDNFSGSGTGALPDITLSRQASPTLKDVWLLTATPTAPEPTSRDAQATTTSILPAAEKPGEGEPVLTAEVDPGFTARDKESEVTTRPRETTQLLITHWVSTARATTAQAPVTSHPHRDVQPGLHETSAPTAPGQPDQQPPSGGTSVIKEVAEDGATNQLPTGEGSGEQDFTFETSGENTAVAAVEPDQRNQPPVDEGATGASQGLLDRKEVLGGVIAGGLVGLIFAVCLVGFMLYRMKKKDEGSYSLEEPKQANGGAYQKPTKQEEFYA.

Residues 1 to 22 (MRRAALWLWLCALALRLQPVLP) form the signal peptide. The Extracellular portion of the chain corresponds to 23–253 (QIVTVNVPPE…GLLDRKEVLG (231 aa)). 2 disordered regions span residues 28–57 (NVPP…DITL) and 145–185 (TTAQ…GGTS). A compositionally biased stretch (acidic residues) spans 32–42 (EDQDGSGDDSD). Residue S37 is glycosylated (O-linked (Xyl...) (chondroitin sulfate) serine). N43 carries an N-linked (GlcNAc...) asparagine glycan. S45 and S47 each carry an O-linked (Xyl...) (heparan sulfate) serine glycan. The segment covering 173–183 (GQPDQQPPSGG) has biased composition (low complexity). 2 O-linked (Xyl...) (chondroitin sulfate) serine glycosylation sites follow: S205 and S215. The helical transmembrane segment at 254-274 (GVIAGGLVGLIFAVCLVGFML) threads the bilayer. Residues 275-309 (YRMKKKDEGSYSLEEPKQANGGAYQKPTKQEEFYA) lie on the Cytoplasmic side of the membrane. The tract at residues 283–309 (GSYSLEEPKQANGGAYQKPTKQEEFYA) is disordered. S284 is modified (phosphoserine).

This sequence belongs to the syndecan proteoglycan family. In terms of assembly, interacts with CDCP1. Interacts (via C-terminus) with TIAM1 (via PDZ domain). Interacts with MDK. In terms of processing, shedding is enhanced by a number of factors such as heparanase, thrombin or EGF. Also by stress and wound healing. PMA-mediated shedding is inhibited by TIMP3.

The protein localises to the membrane. Its subcellular location is the secreted. The protein resides in the extracellular exosome. Cell surface proteoglycan that contains both heparan sulfate and chondroitin sulfate and that links the cytoskeleton to the interstitial matrix. Regulates exosome biogenesis in concert with SDCBP and PDCD6IP. Able to induce its own expression in dental mesenchymal cells and also in the neighboring dental epithelial cells via an MSX1-mediated pathway. The protein is Syndecan-1 of Mesocricetus auratus (Golden hamster).